The following is a 969-amino-acid chain: Putative zinc protease mug138 (969 aa).

Histidine 68 lines the Zn(2+) pocket. The active-site Proton acceptor is the glutamate 71. Positions 72 and 149 each coordinate Zn(2+).

It belongs to the peptidase M16 family.

Its subcellular location is the cytoplasm. In terms of biological role, has a role in meiosis. The chain is Putative zinc protease mug138 (mug138) from Schizosaccharomyces pombe (strain 972 / ATCC 24843) (Fission yeast).